The following is a 464-amino-acid chain: AAC-rich mRNA clone AAC11 protein (464 aa).

Residues 1–15 (MSTPTLPNLSQLHGI) show a composition bias toward polar residues. Disordered regions lie at residues 1-112 (MSTP…HGTN) and 125-464 (SLPQ…SFFH). 3 stretches are compositionally biased toward low complexity: residues 16–65 (QNQS…QQPQ), 78–88 (NPNGLGLMGHN), and 130–160 (INNNNNNNNNNSNINNNNNNSNNNNNNNNSN). A compositionally biased stretch (polar residues) spans 161 to 174 (LGINSSPTQSSANS). 3 consecutive DNA-binding regions (a.T hook) follow at residues 177 to 189 (KRSRGRPRKNPPS), 198 to 210 (KRKRGRPPKMDEE), and 224 to 236 (NKKRGRPKKPKDE). Polar residues predominate over residues 240–253 (DYNNTSFSDSNTDG). Residues 255–267 (PKKRGRPPKAKGD) constitute a DNA-binding region (a.T hook 4). Over residues 276 to 428 (NTLGNGILNS…NNAGNLGNLG (153 aa)) the composition is skewed to low complexity. A compositionally biased stretch (polar residues) spans 433–464 (LHSSDPNNPNAQKSFPDSTNTMDFQPNFSFFH).

This chain is AAC-rich mRNA clone AAC11 protein (AAC11), found in Dictyostelium discoideum (Social amoeba).